A 1046-amino-acid polypeptide reads, in one-letter code: UDP-N-acetylglucosamine--peptide N-acetylglucosaminyltransferase 110 kDa subunit (1046 aa).

At alanine 2 the chain carries N-acetylalanine. A phosphoserine; by GSK3-beta; alternate mark is found at serine 3 and serine 4. O-linked (GlcNAc) serine; alternate glycosylation is found at serine 3 and serine 4. Serine 20 is modified (phosphoserine). TPR repeat units follow at residues 21–54 (FQGL…EPDN), 89–122 (AEAY…KPDF), 123–156 (IDGY…NPDL), 157–190 (YCVR…QPNF), 191–224 (AVAW…DPNF), 225–258 (LDAY…SPNH), 259–292 (AVVH…QPHF), 293–326 (PDAY…CPTH), 327–360 (ADSL…FPEF), 361–394 (AAAH…SPTF), 395–428 (ADAY…NPAF), and 429–462 (ADAH…KPDF). A glycan (O-linked (GlcNAc) serine; by autocatalysis) is linked at serine 399. Threonine 454 is subject to Phosphothreonine. The TPR 13; truncated repeat unit spans residues 463-473 (PDAYCNLAHCL). A DFP motif motif is present at residues 464–466 (DAY). A Nuclear localization signal motif is present at residues 487–503 (KKLVSIVAEQLEKNRLP). The Proton acceptor role is filled by histidine 508. Residues glutamine 849, lysine 852, 906-908 (APK), 911-914 (HVRR), 930-932 (HTT), and aspartate 935 each bind UDP. Tyrosine 989 is modified (phosphotyrosine). The interval 991 to 1010 (KKIRGKVWKQRISSPLFNTK) is required for phosphatidylinositol 3,4,5-triphosphate binding.

It belongs to the glycosyltransferase 41 family. O-GlcNAc transferase subfamily. As to quaternary structure, monomer; may exist in different oligomerization states in cells. Homotrimer, oligomerizes via TPR repeats 6 and 7. Trimerization is not necessary for activity in vitro, however it increases affinity for UDP-GlcNAc. Component of a THAP1/THAP3-HCFC1-OGT complex. Component of the NSL complex at least composed of MOF/KAT8, KANSL1, KANSL2, KANSL3, MCRS1, PHF20, OGT1/OGT, WDR5 and HCFC1. Found in a complex with KIF5B, RHOT1, RHOT2 and TRAK1. Found in a complex composed of at least SINHCAF, SIN3A, HDAC1, SAP30, RBBP4, OGT and TET1. Component of a complex composed of KMT2E/MLL5, OGT and USP7; the complex stabilizes KMT2E/MLL5, preventing KMT2E/MLL5 ubiquitination and proteasomal-mediated degradation. Interacts (via TPRs 1-6) with SIN3A; the interaction mediates transcriptional repression in parallel with histone deacetylase. Interacts (via TPR 5-6) with TET1, TET2 and TET3. Interacts (via TPR repeats 6 and 7) with ATXN10. Interacts with NSD2. Interacts with PROSER1; this interaction mediates TET2 O-GlcNAcylation and stability by promoting the interaction between OGT and TET2. Ubiquitinated by the SCF(FBXO31) complex, leading to its proteasomal degradation. Post-translationally, phosphorylation on Ser-3 or Ser-4 by GSK3-beta positively regulates its activity. Phosphorylation at Thr-454 by AMPK promotes nuclear localization. In terms of processing, glycosylated via autocatalysis; O-GlcNAcylation at Ser-399 promotes nuclear localization.

It is found in the cytoplasm. It localises to the nucleus. Its subcellular location is the cell membrane. The protein localises to the mitochondrion membrane. The protein resides in the cell projection. The enzyme catalyses L-seryl-[protein] + UDP-N-acetyl-alpha-D-glucosamine = 3-O-(N-acetyl-beta-D-glucosaminyl)-L-seryl-[protein] + UDP + H(+). The catalysed reaction is L-threonyl-[protein] + UDP-N-acetyl-alpha-D-glucosamine = 3-O-(N-acetyl-beta-D-glucosaminyl)-L-threonyl-[protein] + UDP + H(+). Its pathway is protein modification; protein glycosylation. Its activity is regulated as follows. Subject to product inhibition by UDP. Catalyzes the transfer of a single N-acetylglucosamine from UDP-GlcNAc to a serine or threonine residue in cytoplasmic and nuclear proteins resulting in their modification with a beta-linked N-acetylglucosamine (O-GlcNAc). Glycosylates a large and diverse number of proteins including histone H2B, AKT1, AMPK, ATG4B, CAPRIN1, EZH2, FNIP1, GSDMD, KRT7, LMNA, LMNB1, LMNB2, RPTOR, HOXA1, PFKL, KMT2E/MLL5, MAPT/TAU, TET2, RBL2, RET, NOD2 and HCFC1. Can regulate their cellular processes via cross-talk between glycosylation and phosphorylation or by affecting proteolytic processing. Involved in insulin resistance in muscle and adipocyte cells via glycosylating insulin signaling components and inhibiting the 'Thr-308' phosphorylation of AKT1, enhancing IRS1 phosphorylation and attenuating insulin signaling. Involved in glycolysis regulation by mediating glycosylation of 6-phosphofructokinase PFKL, inhibiting its activity. Plays a key role in chromatin structure by mediating O-GlcNAcylation of 'Ser-112' of histone H2B: recruited to CpG-rich transcription start sites of active genes via its interaction with TET proteins (TET1, TET2 or TET3). As part of the NSL complex indirectly involved in acetylation of nucleosomal histone H4 on several lysine residues. O-GlcNAcylation of 'Ser-75' of EZH2 increases its stability, and facilitating the formation of H3K27me3 by the PRC2/EED-EZH2 complex. Stabilizes KMT2E/MLL5 by mediating its glycosylation, thereby preventing KMT2E/MLL5 ubiquitination. Regulates circadian oscillation of the clock genes and glucose homeostasis in the liver. Stabilizes clock proteins BMAL1 and CLOCK through O-glycosylation, which prevents their ubiquitination and subsequent degradation. Promotes the CLOCK-BMAL1-mediated transcription of genes in the negative loop of the circadian clock such as PER1/2 and CRY1/2. O-glycosylates HCFC1 and regulates its proteolytic processing and transcriptional activity. Component of a THAP1/THAP3-HCFC1-OGT complex that is required for the regulation of the transcriptional activity of RRM1. Regulates mitochondrial motility in neurons by mediating glycosylation of TRAK1. Promotes autophagy by mediating O-glycosylation of ATG4B. Acts as a regulator of mTORC1 signaling by mediating O-glycosylation of RPTOR and FNIP1: O-GlcNAcylation of RPTOR in response to glucose sufficiency promotes activation of the mTORC1 complex. This is UDP-N-acetylglucosamine--peptide N-acetylglucosaminyltransferase 110 kDa subunit (Ogt) from Mus musculus (Mouse).